Here is a 316-residue protein sequence, read N- to C-terminus: Beta-ketoacyl-[acyl-carrier-protein] synthase III (316 aa).

Catalysis depends on residues Cys-112 and His-243. The ACP-binding stretch occupies residues 244-248 (QANLR). The active site involves Asn-273.

It belongs to the thiolase-like superfamily. FabH family. As to quaternary structure, homodimer.

It localises to the cytoplasm. The enzyme catalyses malonyl-[ACP] + acetyl-CoA + H(+) = 3-oxobutanoyl-[ACP] + CO2 + CoA. Its pathway is lipid metabolism; fatty acid biosynthesis. In terms of biological role, catalyzes the condensation reaction of fatty acid synthesis by the addition to an acyl acceptor of two carbons from malonyl-ACP. Catalyzes the first condensation reaction which initiates fatty acid synthesis and may therefore play a role in governing the total rate of fatty acid production. Possesses both acetoacetyl-ACP synthase and acetyl transacylase activities. Its substrate specificity determines the biosynthesis of branched-chain and/or straight-chain of fatty acids. The polypeptide is Beta-ketoacyl-[acyl-carrier-protein] synthase III (Histophilus somni (strain 129Pt) (Haemophilus somnus)).